The primary structure comprises 279 residues: YTPNDPYFSSRQYGPQKIQAPQAWDIAEGSGAKIAIVDTGVQSNHPDLAGKVVGGWDFVDNDSTPQNGNGHGTHCAGIAAAVTNNSTGIAGTAPKASILAVRVLDNSGSGTWTAVANGITYAADQGAKVISLSLGGTVGNSGLQQAVNYAWNKGSVVVAAAGNAGNTAPNYPAYYSNAIAVASTDQNDNKSSFSTYGSVVDVAAPGSWIYSTYPTSTYASLSGTSMATPHVAGVAGLLASQGRSASNIRAAIENTADKISGTGTYWAKGRVNAYKAVQY.

Asp-5 contributes to the Ca(2+) binding site. Residues 12–277 (QYGPQKIQAP…KGRVNAYKAV (266 aa)) enclose the Peptidase S8 domain. Asp-38 serves as the catalytic Charge relay system. Ca(2+) contacts are provided by Asp-47, Asp-57, Asp-60, Asp-62, Thr-64, and Gln-66. Residue His-71 is the Charge relay system of the active site. Residues Val-82, Asn-85, Thr-87, and Ile-89 each coordinate Ca(2+). 3 residues coordinate Na(+): Ala-173, Tyr-175, and Ala-178. The Ca(2+) site is built by Val-199 and Asp-201. Asp-201 is a binding site for Na(+). Ser-225 (charge relay system) is an active-site residue.

This sequence belongs to the peptidase S8 family. The cofactor is Ca(2+). It depends on Na(+) as a cofactor.

The protein resides in the secreted. It catalyses the reaction Hydrolysis of proteins, including collagen.. In Thermoactinomyces vulgaris, this protein is Thermitase.